Consider the following 525-residue polypeptide: D-aminopeptidase (525 aa).

Serine 62 acts as the Nucleophile in catalysis. The active-site Proton donor/acceptor is lysine 65. An important for specificity region spans residues 485–495; it reads PRALDHTAPGD. Aspartate 489 is a binding site for substrate.

The protein belongs to the peptidase S12 family. Homodimer.

The catalysed reaction is Release of an N-terminal D-amino acid from a peptide, Xaa-|-Yaa-, in which Xaa is preferably D-Ala, D-Ser or D-Thr. D-amino acid amides and methyl esters also are hydrolyzed, as is glycine amide.. Its activity is regulated as follows. Inhibited by beta-lactam compounds such as 6-aminopenicillic acid, 7-aminocephalosporanic acid, benzylpenicillin and ampicillin. Inhibited by p-chloromercuribenzoate. Hydrolyzes N-terminal residues in D-amino acid-containing peptides. The polypeptide is D-aminopeptidase (Gluconobacter oxydans (strain 621H) (Gluconobacter suboxydans)).